Consider the following 270-residue polypeptide: Putative tRNA (cytidine(32)/guanosine(34)-2'-O)-methyltransferase (270 aa).

Positions 53, 55, 78, 94, and 119 each coordinate S-adenosyl-L-methionine. The Proton acceptor role is filled by K159.

It belongs to the class I-like SAM-binding methyltransferase superfamily. RNA methyltransferase RlmE family. TRM7 subfamily.

The protein localises to the cytoplasm. The enzyme catalyses cytidine(32)/guanosine(34) in tRNA + 2 S-adenosyl-L-methionine = 2'-O-methylcytidine(32)/2'-O-methylguanosine(34) in tRNA + 2 S-adenosyl-L-homocysteine + 2 H(+). Functionally, methylates the 2'-O-ribose of nucleotides at positions 32 and 34 of the tRNA anticodon loop of substrate tRNAs. This chain is Putative tRNA (cytidine(32)/guanosine(34)-2'-O)-methyltransferase (fsjA), found in Dictyostelium discoideum (Social amoeba).